The primary structure comprises 641 residues: Macrolide export ATP-binding/permease protein MacB (641 aa).

An ABC transporter domain is found at 2–236 (IFLKNICKNI…LILKTMPKEK (235 aa)). 34–41 (GQSGSGKT) is an ATP binding site. Helical transmembrane passes span 265 to 285 (ILTMLGIIIGIASVVCVVALG), 519 to 539 (ACVAVIALIVGGIGVMNIMLV), 571 to 591 (MICTIGAILGVILSIFVIFAF), and 604 to 624 (AYSVLLGLLSSMFIGVVFGFF).

It belongs to the ABC transporter superfamily. Macrolide exporter (TC 3.A.1.122) family. In terms of assembly, homodimer.

It is found in the cell inner membrane. Functionally, non-canonical ABC transporter that contains transmembrane domains (TMD), which form a pore in the inner membrane, and an ATP-binding domain (NBD), which is responsible for energy generation. Confers resistance against macrolides. The chain is Macrolide export ATP-binding/permease protein MacB from Campylobacter jejuni subsp. jejuni serotype O:2 (strain ATCC 700819 / NCTC 11168).